Consider the following 173-residue polypeptide: Protein C2 (173 aa).

A zinc finger lies at 69-85 (CNCHFTIHHECNRGFSH).

Belongs to the geminiviridae transcriptional activator protein family. In terms of assembly, monomer. Interacting with and inactivating host adenosine kinase 2 (ADK2) in the cytoplasm. Interacts with and inhibits host SNF1 kinase.

Its subcellular location is the host cytoplasm. In terms of biological role, acts as a suppressor of RNA-mediated gene silencing, also known as post-transcriptional gene silencing (PTGS), a mechanism of plant viral defense that limits the accumulation of viral RNAs. Suppresses the host RNA silencing by inhibiting adenosine kinase 2 (ADK2), a kinase involved in a general methylation pathway. Also suppresses the host basal defense by interacting with and inhibiting SNF1 kinase, a key regulator of cell metabolism implicated in innate antiviral defense. Determines pathogenicity. The protein is Protein C2 of Beet curly top virus (strain California/Logan) (BCTV).